The following is a 156-amino-acid chain: Myosin regulatory light chain, striated adductor muscle (156 aa).

Alanine 1 bears the Blocked amino end (Ala) mark. 2 consecutive EF-hand domains span residues 15–50 (KQIQEMKEAFSMIDVDRDGFVNKDDLKAISEQLGRT) and 84–119 (DTEETLRNAFAMFDELDTKKLNIEYIKDLLENMGDN). Aspartate 28, aspartate 30, aspartate 32, and aspartate 39 together coordinate Ca(2+).

In molluscan muscle, calcium regulation is associated with myosin rather than with actin. Muscle myosin contains two types of light chains: the catalytic light chain, essential for ATPase activity, and the regulatory light chain, a calcium-binding protein responsible for Ca(2+) dependent binding and Ca(2+) dependent Mg-ATPase activity. The sequence is that of Myosin regulatory light chain, striated adductor muscle from Mizuhopecten yessoensis (Japanese scallop).